A 463-amino-acid polypeptide reads, in one-letter code: MAFQWPRFPLQPWRHVTGHLRLPGDKSISNRSLLLGALAEGVTEVTGLLDSDDARAMLNALRDLGVVIEGPHQGRCTVHGVGLHGLKAPPGPLFLGNAGTAMRPLSAALALQPFDTTLTGDPRMSERPINRLVDALREMGAVIEYLAQEGYPPLTIRGGGSVSSQFLTALLMTAPMASAQIKSGLLLSKPYIDITLNVMPFGVPTRDHTERIFAVSAIRYPSPAVLRLEGDATSASYFLAAAGIKGVPVTGIGRHSMQGDSWFPRALRRMGARSCGSSMIVCPRGELRAAVRSDSNSIPDAAMTLATXXALARGGRRPRTIFAWRVKETDRLYAMSTELGAAGARVVPGAGLRGCPLRGRSYYVARCRRDSRMAMCFSLPAHGGRAVRHPGSRLHRQDAELSSKVVRSVPEVWGMAITALRCPSGGALRAMARFESMTGQRGDVVSQLPLLGAARRHAGTFGG.

Residues Lys26, Ser27, and Arg31 each coordinate 3-phosphoshikimate. Phosphoenolpyruvate is bound at residue Lys26. Phosphoenolpyruvate is bound by residues Gly99 and Arg127. The 3-phosphoshikimate site is built by Ser163, Ser164, Gln165, Ser188, Asp300, and Lys327. Residue Gln165 coordinates phosphoenolpyruvate. Asp300 acts as the Proton acceptor in catalysis. The phosphoenolpyruvate site is built by Arg331 and Arg372.

Belongs to the EPSP synthase family. As to quaternary structure, monomer.

It localises to the cytoplasm. The catalysed reaction is 3-phosphoshikimate + phosphoenolpyruvate = 5-O-(1-carboxyvinyl)-3-phosphoshikimate + phosphate. Its pathway is metabolic intermediate biosynthesis; chorismate biosynthesis; chorismate from D-erythrose 4-phosphate and phosphoenolpyruvate: step 6/7. Its function is as follows. Catalyzes the transfer of the enolpyruvyl moiety of phosphoenolpyruvate (PEP) to the 5-hydroxyl of shikimate-3-phosphate (S3P) to produce enolpyruvyl shikimate-3-phosphate and inorganic phosphate. The sequence is that of 3-phosphoshikimate 1-carboxyvinyltransferase from Burkholderia pseudomallei (Pseudomonas pseudomallei).